The primary structure comprises 365 residues: Magnesium-chelatase subunit ChlI homolog (365 aa).

40–47 contacts ATP; that stretch reads EKGTAKST. Residues 340-365 are disordered; that stretch reads FKQQNNKDNEEKEEHKDDDVKKNMMK. Residues 344-365 are compositionally biased toward basic and acidic residues; that stretch reads NNKDNEEKEEHKDDDVKKNMMK.

Belongs to the Mg-chelatase subunits D/I family.

In Methanocaldococcus jannaschii (strain ATCC 43067 / DSM 2661 / JAL-1 / JCM 10045 / NBRC 100440) (Methanococcus jannaschii), this protein is Magnesium-chelatase subunit ChlI homolog.